The following is a 175-amino-acid chain: NADH-ubiquinone oxidoreductase chain 6 (175 aa).

Transmembrane regions (helical) follow at residues 1 to 21, 27 to 47, 49 to 69, 88 to 108, and 149 to 169; these read MMTY…VGFS, VYGG…IMNF, GSFL…VVFG, VVFG…LYVL, and YGMW…VVVM.

It belongs to the complex I subunit 6 family. As to quaternary structure, core subunit of respiratory chain NADH dehydrogenase (Complex I) which is composed of 45 different subunits.

It localises to the mitochondrion inner membrane. It carries out the reaction a ubiquinone + NADH + 5 H(+)(in) = a ubiquinol + NAD(+) + 4 H(+)(out). Its function is as follows. Core subunit of the mitochondrial membrane respiratory chain NADH dehydrogenase (Complex I) which catalyzes electron transfer from NADH through the respiratory chain, using ubiquinone as an electron acceptor. Essential for the catalytic activity and assembly of complex I. This Pteropus scapulatus (Little red flying fox) protein is NADH-ubiquinone oxidoreductase chain 6 (MT-ND6).